We begin with the raw amino-acid sequence, 527 residues long: Gustatory receptor for bitter taste 66a (527 aa).

Over 1–46 the chain is Cytoplasmic; that stretch reads MAQAEDAVQPLLQQFQQLFFISKIAGILPQDLEKFRSRNLLEKSRN. Residues 47–67 traverse the membrane as a helical segment; that stretch reads GMIYMLSTLILYVVLYNILIY. Residues 68–80 are Extracellular-facing; the sequence is SFGEEDRSLKASQ. Residues 81-101 traverse the membrane as a helical segment; sequence STLTFVIGLFLTYIGLIMMVS. Over 102–144 the chain is Cytoplasmic; that stretch reads DQLTALRNQGRIGELYERIRLVDERLYKEGCVMDNSTIGRRIR. Residues 145-165 traverse the membrane as a helical segment; it reads IMLIMTVIFELSILVSTYVKL. Topologically, residues 166–174 are extracellular; that stretch reads VDYSQWMSL. Residues 175-195 traverse the membrane as a helical segment; sequence LWIVSAIPTFINTLDKIWFAV. Over 196–345 the chain is Cytoplasmic; the sequence is SLYALKERFE…KALNELWSYP (150 aa). The chain crosses the membrane as a helical span at residues 346–366; sequence ILSLMAYGFLIFTAQLYFLYC. Residues 367–382 are Extracellular-facing; the sequence is ATQYQSIPSLFRSAKN. A helical transmembrane segment spans residues 383 to 403; sequence PFITVIVLSYTSGKCVYLIYL. At 404–460 the chain is on the cytoplasmic side; that stretch reads SWKTSQASKRTGISLHKCGVVADDNLLYEIVNHLSLKLLNHSVDFSACGFFTLDMET. A helical transmembrane segment spans residues 461–481; it reads LYGVSGGITSYLIILIQFNLA. Topologically, residues 482-527 are extracellular; it reads AQQAKEAIQTFNSLNDTAGLVGAATDMDNISSTLRDFVTTTMTPAV. N-linked (GlcNAc...) asparagine glycans are attached at residues Asn-496 and Asn-510.

It belongs to the insect chemoreceptor superfamily. Gustatory receptor (GR) family. Gr66a subfamily. Taste hairs in labial palps, labral and cibarial sense organs and forelegs. In larvae, is expressed in neurons of the terminal external chemosensory organ, as well as in the dorsal, ventral, and posterior pharyngeal sense organs.

It localises to the cell membrane. Gustatory receptor required for response to the bitter in taste neurons. Gr66a cells respond to bitter compounds such as caffeine, theophylline, threonine or valine. Flies avoid bitter substances, suggesting that Gr66a neuron activity is sufficient to mediate avoidance behavior. Required for sensing and avoiding N,N-Diethyl-meta-toluamide (DEET), the most widely used insect repellent worldwide, as well as to L-canavanine, a plant-derived insecticide. Gr66a neurons are also involved in the sex-specific perception of molecules inducing male avoidance behavior, probably through sensing 7-tricosene (7-T), a male cuticular pheromone and leading to inhibition of male-male courtship. Finally, also plays a role in oviposition behavior, in which females evaluate their environment and choose to lay eggs on substrates they may find aversive in other contexts. This chain is Gustatory receptor for bitter taste 66a (Gr66a), found in Drosophila melanogaster (Fruit fly).